The chain runs to 342 residues: UDP-3-O-acylglucosamine N-acyltransferase (342 aa).

Histidine 234 functions as the Proton acceptor in the catalytic mechanism.

The protein belongs to the transferase hexapeptide repeat family. LpxD subfamily. As to quaternary structure, homotrimer.

The enzyme catalyses a UDP-3-O-[(3R)-3-hydroxyacyl]-alpha-D-glucosamine + a (3R)-hydroxyacyl-[ACP] = a UDP-2-N,3-O-bis[(3R)-3-hydroxyacyl]-alpha-D-glucosamine + holo-[ACP] + H(+). It participates in bacterial outer membrane biogenesis; LPS lipid A biosynthesis. In terms of biological role, catalyzes the N-acylation of UDP-3-O-acylglucosamine using 3-hydroxyacyl-ACP as the acyl donor. Is involved in the biosynthesis of lipid A, a phosphorylated glycolipid that anchors the lipopolysaccharide to the outer membrane of the cell. The protein is UDP-3-O-acylglucosamine N-acyltransferase of Oleidesulfovibrio alaskensis (strain ATCC BAA-1058 / DSM 17464 / G20) (Desulfovibrio alaskensis).